Consider the following 729-residue polypeptide: Phosphoribosylformylglycinamidine synthase subunit PurL (729 aa).

H54 is an active-site residue. Residues Y57 and K96 each coordinate ATP. E98 contributes to the Mg(2+) binding site. Residues 99–102 (SHNH) and R121 each bind substrate. H100 acts as the Proton acceptor in catalysis. Residue D122 coordinates Mg(2+). Q245 serves as a coordination point for substrate. D273 lines the Mg(2+) pocket. Substrate is bound at residue 317–319 (ETQ). ATP-binding residues include D495 and G532. A Mg(2+)-binding site is contributed by N533. S535 contacts substrate.

The protein belongs to the FGAMS family. As to quaternary structure, monomer. Part of the FGAM synthase complex composed of 1 PurL, 1 PurQ and 2 PurS subunits.

It is found in the cytoplasm. The enzyme catalyses N(2)-formyl-N(1)-(5-phospho-beta-D-ribosyl)glycinamide + L-glutamine + ATP + H2O = 2-formamido-N(1)-(5-O-phospho-beta-D-ribosyl)acetamidine + L-glutamate + ADP + phosphate + H(+). Its pathway is purine metabolism; IMP biosynthesis via de novo pathway; 5-amino-1-(5-phospho-D-ribosyl)imidazole from N(2)-formyl-N(1)-(5-phospho-D-ribosyl)glycinamide: step 1/2. Part of the phosphoribosylformylglycinamidine synthase complex involved in the purines biosynthetic pathway. Catalyzes the ATP-dependent conversion of formylglycinamide ribonucleotide (FGAR) and glutamine to yield formylglycinamidine ribonucleotide (FGAM) and glutamate. The FGAM synthase complex is composed of three subunits. PurQ produces an ammonia molecule by converting glutamine to glutamate. PurL transfers the ammonia molecule to FGAR to form FGAM in an ATP-dependent manner. PurS interacts with PurQ and PurL and is thought to assist in the transfer of the ammonia molecule from PurQ to PurL. In Staphylococcus saprophyticus subsp. saprophyticus (strain ATCC 15305 / DSM 20229 / NCIMB 8711 / NCTC 7292 / S-41), this protein is Phosphoribosylformylglycinamidine synthase subunit PurL.